Reading from the N-terminus, the 104-residue chain is N(4)-acetylcytidine amidohydrolase (104 aa).

The ASCH domain occupies 6–96 (ITFYQRFEAD…TIYPNEHESW (91 aa)). Lys21 functions as the Proton acceptor in the catalytic mechanism. Thr24 (nucleophile) is an active-site residue. The Proton donor role is filled by Glu74.

The protein belongs to the N(4)-acetylcytidine amidohydrolase family.

The enzyme catalyses N(4)-acetylcytidine + H2O = cytidine + acetate + H(+). It carries out the reaction N(4)-acetyl-2'-deoxycytidine + H2O = 2'-deoxycytidine + acetate + H(+). It catalyses the reaction N(4)-acetylcytosine + H2O = cytosine + acetate + H(+). Catalyzes the hydrolysis of N(4)-acetylcytidine (ac4C). In Haemophilus influenzae (strain 86-028NP), this protein is N(4)-acetylcytidine amidohydrolase.